The primary structure comprises 650 residues: MNNKSKRMSAAGLLIAIGIVYGDIGTSPLYVMKSIVKAMGGIGNVNREFIIGSISLVLWTVTLLTTLQTVIIALKATNHGEGGIFALYTLVRKRAKWLVLPALIGGAAILADGTLTPAVTVTTAIEGLKGLQLGGGVPVSSQSMVIAITVLILLVLFSIQKMGTSIIGKAFGPIMFVWFTFLGVIGLINMSGDWSILQAINPVYAIKLLFSPYNKAGIFILGSIFLATTGAEALYSDVGHVGKKNIIGSWPFVFVCLSLNYFGQGVWILNNPTYRPADGGVLNPFYEMIPSDFRLAAIILATIAAVIASQALITGSFTLVAEASGLKFLPRMKIDYPSTEKGQIYIPSINKGICVATIAIVLYFQTSAHMEAAYGLSITISMLMTTILLYEWLAMKKVNPVWNWIFLIFFGVLDIMFMISSLTKFTHGGYVSLFIAGAIGFIMYVWYYGNKIRDKREARNAYVRLDEYTDMLTNLSHDENYPTYATNLVYMANVKYNKFIKREILYSILDKRPKRAKAYWFVTVNVTNEPFTAEYAVNTYGTKNVINIQLYLGFKKQTSVNVYIRQIVHDLIADGTIEPQPQEYTTTPGRDVGDFSFVIVNDVISPQTQLIGYEKWLVEARVRLQNLSSNPASWFGLEYADTVIERVPLS.

The next 12 membrane-spanning stretches (helical) occupy residues 12–32 (GLLI…LYVM), 54–74 (ISLV…IIAL), 97–117 (WLVL…TLTP), 139–159 (VSSQ…LFSI), 170–190 (AFGP…LINM), 216–236 (AGIF…ALYS), 249–269 (SWPF…VWIL), 295–315 (LAAI…LITG), 344–364 (IYIP…VLYF), 375–395 (GLSI…WLAM), 400–420 (PVWN…FMIS), and 428–448 (GGYV…VWYY).

The protein belongs to the HAK/KUP transporter (TC 2.A.72) family.

Its subcellular location is the cell membrane. The catalysed reaction is K(+)(in) + H(+)(in) = K(+)(out) + H(+)(out). Transport of potassium into the cell. Likely operates as a K(+):H(+) symporter. The polypeptide is Probable potassium transport system protein Kup 1 (Lactobacillus acidophilus (strain ATCC 700396 / NCK56 / N2 / NCFM)).